Here is a 121-residue protein sequence, read N- to C-terminus: Large ribosomal subunit protein uL14 (121 aa).

This sequence belongs to the universal ribosomal protein uL14 family. As to quaternary structure, part of the 50S ribosomal subunit. Forms a cluster with proteins L3 and L19. In the 70S ribosome, L14 and L19 interact and together make contacts with the 16S rRNA in bridges B5 and B8.

Functionally, binds to 23S rRNA. Forms part of two intersubunit bridges in the 70S ribosome. This Hydrogenobaculum sp. (strain Y04AAS1) protein is Large ribosomal subunit protein uL14.